Reading from the N-terminus, the 876-residue chain is Alanine--tRNA ligase (876 aa).

An N6-acetyllysine modification is found at Lys-74. Residues His-564, His-568, Cys-666, and His-670 each coordinate Zn(2+).

The protein belongs to the class-II aminoacyl-tRNA synthetase family. Homotetramer. Requires Zn(2+) as cofactor.

The protein resides in the cytoplasm. The catalysed reaction is tRNA(Ala) + L-alanine + ATP = L-alanyl-tRNA(Ala) + AMP + diphosphate. Functionally, catalyzes the attachment of alanine to tRNA(Ala) in a two-step reaction: alanine is first activated by ATP to form Ala-AMP and then transferred to the acceptor end of tRNA(Ala). Also edits incorrectly charged Ser-tRNA(Ala) and Gly-tRNA(Ala) via its editing domain. The protein is Alanine--tRNA ligase of Escherichia coli (strain ATCC 8739 / DSM 1576 / NBRC 3972 / NCIMB 8545 / WDCM 00012 / Crooks).